We begin with the raw amino-acid sequence, 144 residues long: Gas vesicle protein I1 (144 aa).

Residues 1–144 form a disordered region; the sequence is MSDKQQQKHK…SPTEDEVNDE (144 aa). Composition is skewed to basic residues over residues 7–17 and 26–46; these read QKHKQKARQAR and KARR…TRNR. The segment covering 75–94 has biased composition (polar residues); it reads MPPQKSNAENAVRNSHSTVP. Residues 122 to 136 show a composition bias toward low complexity; sequence SEASAPSDESASGSP.

It belongs to the gas vesicle GvpI family. As to quaternary structure, gvpF to GvpM interact with each other in vitro, and may form multi-subunit complex(es). Interacts with GvpC1 and GvpO.

It is found in the gas vesicle. Its function is as follows. Proteins GvpF to GvpM might be involved in nucleating gas vesicle formation. A minor component of the gas vesicle. Gas vesicles are hollow, gas filled proteinaceous nanostructures found in several microbial planktonic microorganisms. They allow positioning of halobacteria at the optimal depth for growth in the poorly aerated, shallow brine pools of their habitat. Expression of a 9.5 kb p-vac DNA fragment containing 2 divergently transcribed regions (gvpD-gvpE-gvpF-gvpG-gvpH-gvpI-gvpJ-gvpK-gvpL-gvpM and gvpA-gvpC-gvpN-gvpO) allows H.volcanii to produce gas vesicles. A similar region restores gas vesicle production in H.halobium without the p-vac locus, but it still has the c-vac locus. This chain is Gas vesicle protein I1 (gvpI11), found in Halobacterium salinarum (strain ATCC 700922 / JCM 11081 / NRC-1) (Halobacterium halobium).